Consider the following 680-residue polypeptide: Galactose oxidase (680 aa).

Positions 1–24 are cleaved as a signal peptide; it reads MKHFLSLALCFSSINAVAVTVPHK. A propeptide spanning residues 25-41 is cleaved from the precursor; the sequence is SGGTGSPEGSLQFLSLR. Positions 42–189 constitute an F5/8 type C domain; that stretch reads ASAPIGSAIS…SIAEINVFQA (148 aa). Cys-59 and Cys-68 are joined by a disulfide. Kelch repeat units follow at residues 223-268, 279-321, 323-372, 436-490, and 492-544; these read RVLM…HDMF, QIVV…TMSD, RVFT…LYRS, KILT…VLPD, and STFI…LLLP. Positions 269–313 form a cross-link, 3'-(S-cysteinyl)-tyrosine (Cys-Tyr); it reads CPGISMDGNGQIVVTGGNDAKKTSLYDSSSDSWIPGPDMQVARGY. Tyr-313 provides a ligand contact to Cu cation. Cu cation contacts are provided by Tyr-536 and His-537. Tyr-536 serves as the catalytic Proton acceptor. A disulfide bridge connects residues Cys-556 and Cys-559. His-622 provides a ligand contact to Cu cation.

In terms of assembly, monomer. Cu(2+) serves as cofactor. In terms of processing, galactose oxidase contains a protein-derived free radical cofactor. In the active state, Tyr-313, which is cross-linked to Cys-269 via a thioether bond, is oxidized to a radical and acts with Cu(2+) as a two-electron acceptor in the oxidation reaction. The cross-link is believed to modulate the redox potential of the tyrosyl radical, which is further stabilized by a stacking interaction with Trp-331 in the active site. The post-translational formation of the cross-link is closely linked to the propeptide cleavage event, and both are copper-dependent, autocatalytic processes. The propeptide may act as an intramolecular chaperone, facilitating thioester bond formation and copper binding by positioning of active-site residues, including copper ligands.

It is found in the secreted. The catalysed reaction is D-galactose + O2 = D-galacto-hexodialdose + H2O2. Catalyzes the sterospecific oxidation of primary alcohols to the corresponding aldehydes. The biologically relevant substrate of the enzyme is not known as the enzyme exhibits broad substrate specificity from small alcohols through sugars to oligo- and polysaccharides. The protein is Galactose oxidase (GAOA) of Gibberella zeae (strain ATCC MYA-4620 / CBS 123657 / FGSC 9075 / NRRL 31084 / PH-1) (Wheat head blight fungus).